Consider the following 353-residue polypeptide: Soluble interferon alpha/beta receptor OPG204 (353 aa).

The N-terminal stretch at 1–21 is a signal peptide; that stretch reads MTMKMMVHIYFVSLSLLLLLF. 2 consecutive Ig-like C2-type domains span residues 67–139 and 157–239; these read LGEP…KNGD and PKTY…IVVS. Disulfide bonds link C75–C131 and C174–C223. 5 N-linked (GlcNAc...) asparagine; by host glycosylation sites follow: N119, N184, N263, N271, and N323. One can recognise an Ig-like V-type domain in the interval 248–347; the sequence is PSQDHRFKLI…HNYYFEKTLT (100 aa). C274 and C335 are disulfide-bonded.

The protein belongs to the interleukin-1 receptor family. Interacts with host IFNA1.

The protein resides in the secreted. In terms of biological role, counteracts the antiviral effects of host IFN-alpha/beta and key IFN-inducible proteins involved in viral RNA degradation suxh as host OAS1. Acts as a soluble IFN-alpha receptor and thus inhibits the interaction between host IFN-alpha and its receptor. In Homo sapiens (Human), this protein is Soluble interferon alpha/beta receptor OPG204 (OPG204).